The sequence spans 486 residues: Cardiolipin synthase A (486 aa).

2 consecutive transmembrane segments (helical) span residues 3 to 23 (TVYT…IAGV) and 38 to 58 (MAWL…YLAV). PLD phosphodiesterase domains lie at 219-246 (MDLR…VDPR) and 399-426 (EGGL…DMRS). Residues histidine 224, lysine 226, aspartate 231, histidine 404, lysine 406, and aspartate 411 contribute to the active site.

This sequence belongs to the phospholipase D family. Cardiolipin synthase subfamily. ClsA sub-subfamily.

It is found in the cell inner membrane. The enzyme catalyses 2 a 1,2-diacyl-sn-glycero-3-phospho-(1'-sn-glycerol) = a cardiolipin + glycerol. Catalyzes the reversible phosphatidyl group transfer from one phosphatidylglycerol molecule to another to form cardiolipin (CL) (diphosphatidylglycerol) and glycerol. The sequence is that of Cardiolipin synthase A from Shigella dysenteriae serotype 1 (strain Sd197).